The following is a 503-amino-acid chain: Drimenol monooxygenase (503 aa).

The chain crosses the membrane as a helical span at residues 7–23; the sequence is MICIVVSGLLLYSSRTS. Residue Ser-471 coordinates heme.

It belongs to the cytochrome P450 family. Requires heme as cofactor.

It is found in the membrane. It catalyses the reaction (5S,9S,10S)-drim-7-en-11-ol + reduced [NADPH--hemoprotein reductase] + O2 = (5S,10S)-(9R)-7-drimene-11,12-diol + oxidized [NADPH--hemoprotein reductase] + H2O + H(+). In terms of biological role, catalyzes the conversion of drimenol to drimendiol, a precursor of the sesquiterpenoid polygodial. Polygodial has been shown to be an antifeedant for a number of herbivorous insects. The protein is Drimenol monooxygenase of Persicaria hydropiper (Marshpepper knotweed).